A 343-amino-acid chain; its full sequence is GTPase Obg (343 aa).

Residues 1-157 (MKFIDEVSIS…IEVRLELKLI (157 aa)) form the Obg domain. The segment at 13–44 (SGRGGPGCVSFRRESMQARGGPDGGNGGKGGD) is disordered. Positions 33–43 (GPDGGNGGKGG) are enriched in gly residues. The OBG-type G domain occupies 158-338 (ADVGIVGFPN…FVQELARQIL (181 aa)). GTP contacts are provided by residues 164 to 171 (GFPNAGKS), 189 to 193 (FTTLT), 211 to 214 (DIPG), 290 to 293 (NKID), and 319 to 321 (SAV). Mg(2+)-binding residues include Ser171 and Thr191.

Belongs to the TRAFAC class OBG-HflX-like GTPase superfamily. OBG GTPase family. Monomer. It depends on Mg(2+) as a cofactor.

Its subcellular location is the cytoplasm. In terms of biological role, an essential GTPase which binds GTP, GDP and possibly (p)ppGpp with moderate affinity, with high nucleotide exchange rates and a fairly low GTP hydrolysis rate. Plays a role in control of the cell cycle, stress response, ribosome biogenesis and in those bacteria that undergo differentiation, in morphogenesis control. The protein is GTPase Obg of Bdellovibrio bacteriovorus (strain ATCC 15356 / DSM 50701 / NCIMB 9529 / HD100).